Here is a 1038-residue protein sequence, read N- to C-terminus: Subtilisin-like protease SBT6.1 (1038 aa).

The signal sequence occupies residues 1–30; it reads MKVLGEASSYPYRSCIIVVFLSVSLFWLRP. Positions 31-181 are cleaved as a propeptide — removed in mature form; sequence STYHPQQQNL…TTLNWSRHLL (151 aa). N-linked (GlcNAc...) asparagine glycans are attached at residues Asn-44, Asn-52, Asn-171, and Asn-175. The Peptidase S8 domain maps to 175 to 473; it reads NWSRHLLAQK…VDLLESYEIL (299 aa). The Lumenal segment spans residues 182–1000; that stretch reads AQKTQVTSMF…IDMPFLVPTR (819 aa). The Charge relay system role is filled by Asp-212. A glycan (N-linked (GlcNAc...) asparagine) is linked at Asn-230. His-243 acts as the Charge relay system in catalysis. Asn-300 carries an N-linked (GlcNAc...) asparagine glycan. Catalysis depends on Ser-409, which acts as the Charge relay system. N-linked (GlcNAc...) asparagine glycans are attached at residues Asn-513, Asn-579, Asn-902, and Asn-954. Residues 1001-1021 traverse the membrane as a helical segment; that stretch reads WIVLAGVVASGVLVLLSIWRI. Topologically, residues 1022-1038 are cytoplasmic; that stretch reads RQKRGRRRRASGSNRLA.

It belongs to the peptidase S8 family. In terms of assembly, interacts with PME1 and PME5. In terms of tissue distribution, expressed in the vasculature of roots, cotyledons and leaves.

The protein localises to the golgi apparatus membrane. Functionally, serine protease that catalyzes the first step (site-1 cleavage) in the proteolytic activation of various factors, prior to site-2 cleavage. Part of a regulated intramembrane proteolysis (RIP) cascade. Cleaves BZIP17 and BZIP28 after the Arg-Arg-Ile-Leu (RRIL) motif. May cleave BZIP49 after the RRIL motif. Targets the membrane-associated BZIP17 factor, which functions as a stress sensor and transducer in a signaling pathway that resembles an ER stress response. Following salt stress, BZIP17 is cleaved by SBT6.1 (S1P) and S2P at the C-terminus and the N-terminal bZIP component is translocated to the nucleus, where it activates the expression of salt stress response genes. Cleaves the pectinesterases PME1 after the Arg-Arg-Leu-Met (RRLM) and Arg-Arg-Leu-Leu (RRLL) motifs, and PME5 after the Arg-Arg-Leu-Leu (RRLL) and Arg-Lys-Leu-Met (RKLM) motifs. This processing and C-terminus release occurs in the Golgi apparatus and is required for cell wall targeting of pectinesterases. Thus, SBT6.1 mediates the regulated release of mature pectinesterases from the Golgi. Cleaves the peptide growth factor RALF23 after the Arg-Arg-Ile-Leu (RRIL) motif. This processing is required for RALF23 function in the negative regulation of brassinolide (BL)-mediated signaling pathway (e.g. BL-induced hypocotyl elongation and branching limitation). The protein is Subtilisin-like protease SBT6.1 of Arabidopsis thaliana (Mouse-ear cress).